A 625-amino-acid chain; its full sequence is 1-deoxy-D-xylulose-5-phosphate synthase (625 aa).

Thiamine diphosphate-binding positions include His-80 and 121–123 (GHS). Residue Asp-152 coordinates Mg(2+). Thiamine diphosphate-binding positions include 153–154 (GA), Asn-181, Tyr-288, and Glu-370. Asn-181 contributes to the Mg(2+) binding site.

This sequence belongs to the transketolase family. DXPS subfamily. Homodimer. It depends on Mg(2+) as a cofactor. Thiamine diphosphate serves as cofactor.

It catalyses the reaction D-glyceraldehyde 3-phosphate + pyruvate + H(+) = 1-deoxy-D-xylulose 5-phosphate + CO2. It functions in the pathway metabolic intermediate biosynthesis; 1-deoxy-D-xylulose 5-phosphate biosynthesis; 1-deoxy-D-xylulose 5-phosphate from D-glyceraldehyde 3-phosphate and pyruvate: step 1/1. Catalyzes the acyloin condensation reaction between C atoms 2 and 3 of pyruvate and glyceraldehyde 3-phosphate to yield 1-deoxy-D-xylulose-5-phosphate (DXP). This Alteromonas mediterranea (strain DSM 17117 / CIP 110805 / LMG 28347 / Deep ecotype) protein is 1-deoxy-D-xylulose-5-phosphate synthase.